A 56-amino-acid chain; its full sequence is Bdellin B-3 (56 aa).

Residues 1–42 (DTECVCTKELHRVCGSDGVTYDNECLATCHGASVAHDHACEG) enclose the Kazal-like domain. 3 disulfides stabilise this stretch: cysteine 4-cysteine 29, cysteine 6-cysteine 25, and cysteine 14-cysteine 40.

In terms of biological role, proteinase inhibitor. Blocks the activity of trypsin, plasmin and sperm acrosin. This Hirudo medicinalis (Medicinal leech) protein is Bdellin B-3.